Reading from the N-terminus, the 817-residue chain is Neurabin-2 (817 aa).

Actin-binding regions lie at residues 1–154 and 164–283; these read MMKT…FERS and EAAA…QHRV. The segment at 1–165 is disordered; the sequence is MMKTEPRGPG…PAAAGGDKEA (165 aa). Serine 15 and serine 17 each carry phosphoserine. Basic residues predominate over residues 44-58; sequence GAHHKKYGSNVHRIK. Serine 94, serine 100, and serine 116 each carry phosphoserine. The segment at 100–371 is interaction with D(2) dopamine receptor; that stretch reads SLNENVDHSA…PERGVGNGRA (272 aa). Residues 131 to 141 are compositionally biased toward pro residues; the sequence is SAQPAPPPHPP. The tract at residues 169-255 is interaction with ADRA2A, ADRA2B and ADRA2C; it reads RLLRQERAGL…KRSRVFQPPP (87 aa). Position 192 is a phosphoserine (serine 192). Threonine 193 bears the Phosphothreonine mark. Serine 205 bears the Phosphoserine mark. Threonine 207 is subject to Phosphothreonine. The segment at 216–447 is disordered; it reads EKADSRTGLH…SEEEDPAPSR (232 aa). Residues 252-261 are compositionally biased toward pro residues; sequence QPPPPPPPAP. The span at 291–302 shows a compositional bias: basic and acidic residues; it reads KPREVRKIKPVE. Residues 333 to 342 are compositionally biased toward low complexity; the sequence is STVATAASPA. Over residues 344–356 the composition is skewed to basic and acidic residues; sequence EEPKAQAAPEKEA. Residues 410 to 425 are compositionally biased toward acidic residues; the sequence is LEEDDEDDEEDGEPPY. The interaction with protein phosphatase 1 stretch occupies residues 417-494; sequence DEEDGEPPYE…LEKRVERLEL (78 aa). Position 438 is a phosphoserine (serine 438). The PP1-binding motif motif lies at 447–451; the sequence is RKIHF. The interaction with RGS2 stretch occupies residues 480 to 525; that stretch reads SAEYELEKRVERLELFPVELEKDSEGLGISIIGMGAGADMGLEKLG. The PDZ domain occupies 496–584; sequence PVELEKDSEG…RVRFMIGRER (89 aa). Residues 595-816 form an interaction with TGN38 region; sequence IQQTLEQERW…NLQTLRNSNS (222 aa). Residue serine 658 is modified to Phosphoserine. Positions 671-788 form a coiled coil; it reads FKELQIKHAV…QRRVLEESEL (118 aa).

In terms of assembly, interacts with DCLK2. Possibly exists as a homodimer, homotrimer or a homotetramer. Interacts with F-actin, PPP1CA, neurabin-1, TGN38 and D(2) dopamine receptor. Interacts with RGS1, RGS2, RGS4, RGS19 and ADRA1B, ADRA2A, ADRA2B, ADRA2C, CDKN2A, PPP1R2, RASGFR1 and TIAM1. Interacts (via C-terminus) with SPATA13 (via C-terminal tail). Interacts with ADRA2B. Stimulation of D1 (but not D2) dopamine receptors induces Ser-94 phosphorylation. Dephosphorylation of Ser-94 is mediated mainly by PP1 and to a lesser extent by PP2A. Phosphorylation of spinophilin disrupts its association with F-actin, but does not affect its binding to PP1.

Its subcellular location is the cytoplasm. It is found in the cytoskeleton. The protein resides in the nucleus. It localises to the cell projection. The protein localises to the dendritic spine. Its subcellular location is the postsynaptic density. It is found in the synapse. The protein resides in the cell junction. It localises to the adherens junction. The protein localises to the cell membrane. Its subcellular location is the lamellipodium. It is found in the filopodium. The protein resides in the ruffle membrane. In terms of biological role, seems to act as a scaffold protein in multiple signaling pathways. Modulates excitatory synaptic transmission and dendritic spine morphology. Binds to actin filaments (F-actin) and shows cross-linking activity. Binds along the sides of the F-actin. May play an important role in linking the actin cytoskeleton to the plasma membrane at the synaptic junction. Believed to target protein phosphatase 1/PP1 to dendritic spines, which are rich in F-actin, and regulates its specificity toward ion channels and other substrates, such as AMPA-type and NMDA-type glutamate receptors. Plays a role in regulation of G-protein coupled receptor signaling, including dopamine D2 receptors and alpha-adrenergic receptors. May establish a signaling complex for dopaminergic neurotransmission through D2 receptors by linking receptors downstream signaling molecules and the actin cytoskeleton. Binds to ADRA1B and RGS2 and mediates regulation of ADRA1B signaling. May confer to Rac signaling specificity by binding to both, RacGEFs and Rac effector proteins. Probably regulates p70 S6 kinase activity by forming a complex with TIAM1. Required for hepatocyte growth factor (HGF)-induced cell migration. This chain is Neurabin-2 (PPP1R9B), found in Homo sapiens (Human).